A 191-amino-acid chain; its full sequence is Potassium-transporting ATPase KdpC subunit (191 aa).

A helical transmembrane segment spans residues 7–27 (ASLVLFLSLTLLTGVAYPLLV).

It belongs to the KdpC family. In terms of assembly, the system is composed of three essential subunits: KdpA, KdpB and KdpC.

The protein localises to the cell inner membrane. Functionally, part of the high-affinity ATP-driven potassium transport (or Kdp) system, which catalyzes the hydrolysis of ATP coupled with the electrogenic transport of potassium into the cytoplasm. This subunit acts as a catalytic chaperone that increases the ATP-binding affinity of the ATP-hydrolyzing subunit KdpB by the formation of a transient KdpB/KdpC/ATP ternary complex. The sequence is that of Potassium-transporting ATPase KdpC subunit from Methylibium petroleiphilum (strain ATCC BAA-1232 / LMG 22953 / PM1).